A 424-amino-acid chain; its full sequence is MKGRVRIRGIYATALTSIFSSLSYEIVQQSVEIAERFMREVNNLPADITIKDFEYDRGKIIVMGNGTIEEDLHDVFKYSFHWKSPIKLYSVIEADESCTYGNFKVEPCLEEGIVIKPPYDGKIVLSETKAVSKYAMVWRGKGVTTFSEHINNEEERLRLLTLSSPLNRKGYNVKWRSNAKYATLNELKEDLERLVLRYENREFRDQGEDFYLITLSLPDKLHLDEVRKSIVNTVKYHHMLKLSYNREVDSLEKDKEGSPVKLLEALISDFMKIEHIKADGKAIYLRGGKVIEKEVNNDGYRITLRREINGNGVLDGIGKRIENGDYDIVEYNSDKWYQIHRYYSGIDNSLKGIYINISTPPELLKGKIRYLDLEIDIAIRDSEIIVLDEDELNKKSIYMHSSLVNKAKEVANYLIDCIQQNKLI.

Belongs to the FAU-1 family.

Functionally, probable RNase involved in rRNA stability through maturation and/or degradation of precursor rRNAs. Binds to RNA in loop regions with AU-rich sequences. The chain is Probable ribonuclease FAU-1 from Saccharolobus islandicus (strain M.16.27) (Sulfolobus islandicus).